A 401-amino-acid chain; its full sequence is NADH-dependent flavin oxidoreductase iliE (401 aa).

FMN-binding positions include 25–28 (ASMS) and Gln-107. Residue 188–191 (HAAH) coordinates substrate. 346-347 (AR) contacts FMN.

The protein belongs to the NADH:flavin oxidoreductase/NADH oxidase family.

NADH-dependent flavin oxidoreductase; part of the gene cluster that mediates the biosynthesis of ilicicolin H, a 4-hydroxy-2-pyridonealkaloid that has potent and broad antifungal activities by inhibiting the mitochondrial respiration chain. The biosynthesis of ilicicolin H starts with formation of the tetramic acid by the hybrid PKS-NRPS synthetase iliA with the partnering trans-enoyl reductase iliB since iliA lacks a designated enoylreductase (ER) domain. The cytochrome P450 monooxygenase iliC then catalyzes the ring expansion of the tetramate to the acyclic 2-pyridone. The pericyclase iliD further converts the acyclic 2-pyridone into 8-epi-ilicicolin H. 8-epi-ilicicolin H might then spontaneously convert to ilicicolin H since ilicicolin H is produced in the absence of the epimerase iliE, in contrast to what was observed for the Talaromyces variabilis ilicolin H biosynthetic pathway. The polypeptide is NADH-dependent flavin oxidoreductase iliE (Hypocrea jecorina (strain QM6a) (Trichoderma reesei)).